The primary structure comprises 357 residues: Dihydroorotate dehydrogenase (quinone) (357 aa).

FMN contacts are provided by residues 67–71 and T91; that span reads AGFDK. Substrate is bound at residue K71. 116 to 120 is a substrate binding site; it reads NRMGF. The FMN site is built by N153 and N186. Position 186 (N186) interacts with substrate. S189 serves as the catalytic Nucleophile. N191 contributes to the substrate binding site. FMN is bound by residues K228 and T256. 257 to 258 lines the substrate pocket; sequence NT. FMN is bound by residues G282, G311, and 332 to 333; that span reads YT.

It belongs to the dihydroorotate dehydrogenase family. Type 2 subfamily. In terms of assembly, monomer. FMN serves as cofactor.

The protein resides in the cell membrane. It carries out the reaction (S)-dihydroorotate + a quinone = orotate + a quinol. The protein operates within pyrimidine metabolism; UMP biosynthesis via de novo pathway; orotate from (S)-dihydroorotate (quinone route): step 1/1. In terms of biological role, catalyzes the conversion of dihydroorotate to orotate with quinone as electron acceptor. The chain is Dihydroorotate dehydrogenase (quinone) from Arthrobacter sp. (strain FB24).